The chain runs to 277 residues: Putative pyruvate, phosphate dikinase regulatory protein (277 aa).

ADP is bound at residue 151-158 (GISRTSKT).

It belongs to the pyruvate, phosphate/water dikinase regulatory protein family. PDRP subfamily.

It catalyses the reaction N(tele)-phospho-L-histidyl/L-threonyl-[pyruvate, phosphate dikinase] + ADP = N(tele)-phospho-L-histidyl/O-phospho-L-threonyl-[pyruvate, phosphate dikinase] + AMP + H(+). The enzyme catalyses N(tele)-phospho-L-histidyl/O-phospho-L-threonyl-[pyruvate, phosphate dikinase] + phosphate + H(+) = N(tele)-phospho-L-histidyl/L-threonyl-[pyruvate, phosphate dikinase] + diphosphate. Bifunctional serine/threonine kinase and phosphorylase involved in the regulation of the pyruvate, phosphate dikinase (PPDK) by catalyzing its phosphorylation/dephosphorylation. In Alkaliphilus metalliredigens (strain QYMF), this protein is Putative pyruvate, phosphate dikinase regulatory protein.